A 156-amino-acid chain; its full sequence is Small ribosomal subunit protein uS7 (156 aa).

Belongs to the universal ribosomal protein uS7 family. As to quaternary structure, part of the 30S ribosomal subunit. Contacts proteins S9 and S11.

Functionally, one of the primary rRNA binding proteins, it binds directly to 16S rRNA where it nucleates assembly of the head domain of the 30S subunit. Is located at the subunit interface close to the decoding center, probably blocks exit of the E-site tRNA. The chain is Small ribosomal subunit protein uS7 from Mannheimia succiniciproducens (strain KCTC 0769BP / MBEL55E).